The primary structure comprises 287 residues: ATP synthase gamma chain (287 aa).

This sequence belongs to the ATPase gamma chain family. In terms of assembly, F-type ATPases have 2 components, CF(1) - the catalytic core - and CF(0) - the membrane proton channel. CF(1) has five subunits: alpha(3), beta(3), gamma(1), delta(1), epsilon(1). CF(0) has three main subunits: a, b and c.

The protein resides in the cell inner membrane. In terms of biological role, produces ATP from ADP in the presence of a proton gradient across the membrane. The gamma chain is believed to be important in regulating ATPase activity and the flow of protons through the CF(0) complex. The polypeptide is ATP synthase gamma chain (Serratia proteamaculans (strain 568)).